A 1072-amino-acid polypeptide reads, in one-letter code: Netrin receptor unc-5 (1072 aa).

Positions 1 to 30 (MAVINKAGNVIALLLVKLQLILLFTLSVSG) are cleaved as a signal peptide. Topologically, residues 31–440 (ELPQLDYGSL…SSEAEEAGDL (410 aa)) are extracellular. A disordered region spans residues 77–100 (LGNSSEDENVRPQQGSSSSGLGSS). An N-linked (GlcNAc...) asparagine glycan is attached at Asn-79. The Ig-like domain occupies 128–224 (PIFLIEPESV…RGVVKSQAAT (97 aa)). 5 cysteine pairs are disulfide-bonded: Cys-149-Cys-207, Cys-253-Cys-303, Cys-336-Cys-375, Cys-338-Cys-378, and Cys-352-Cys-364. Residues 232 to 314 (KSFNQSPTSL…AENIAGRRVS (83 aa)) form the Ig-like C2-type domain. The N-linked (GlcNAc...) asparagine glycan is linked to Asn-300. 2 consecutive TSP type-1 domains span residues 324 to 379 (NGGW…AACP) and 398 to 499 (MARW…EQCQ). Residues 441-461 (LLGAPGVGMAALIAAAGVGAV) form a helical membrane-spanning segment. The Cytoplasmic portion of the chain corresponds to 462–1072 (GSPSEATGSS…IVETIGPLWI (611 aa)). The ZU5 domain occupies 654–802 (SSTYEMLGSA…LGHFTVVAEP (149 aa)). In terms of domain architecture, Death spans 980–1067 (LICGALDPPR…DVLDIIVETI (88 aa)).

Belongs to the unc-5 family. Phosphorylated on different cytoplasmic tyrosine residues. Prior to gastrulation, it is strongly expressed in the presumptive mesoderm. Mesodermal expression begins to fade during stages 13-14, persisting only in the cells that form the dorsal vessel. Expressed within the CNS from late stage 13, shortly after the first axons have extended. Detected in several dispersed clusters of cells within the CNS, increasing in number as development proceeds. Also expressed in the peripheral and exit glia, which migrate laterally out of the CNS between stages 14 and 17. Strongly expressed in motor axons that exit the CNS ipsilaterally via the segmental nerve root (SN). Not expressed on either commissural or longitudinal axons within the CNS, nor on motor axons that exit via the intersegmental nerve (ISN). In the periphery, it is detected on all branches of the SN. Also expressed at high level in exit and peripheral glia along both the SN and ISN.

The protein resides in the membrane. In terms of biological role, receptor for netrin required for motor axon guidance. Mediates both short- and long-range axon motor repulsion in the developing nervous system upon ligand binding. Also involved in glial migration. While short-range repulsion requires both fra and unc-5, long-range repulsion only requires unc-5. The protein is Netrin receptor unc-5 (unc-5) of Drosophila melanogaster (Fruit fly).